Reading from the N-terminus, the 417-residue chain is MTRRYLFTSESVTEGHPDKICDQISDTILDALLTEDPSSRVAAEVVVNTGLVLITGEVSTQAQTNLIDLARRKIAEIGYTGEDSGFGANNCTVLIALDKQSPDIAQGVDTAQEQRQASSDERFDSIGAGDQGIMFGYACNEAPELMPLPISLSHRLARQLAVVRHNGQLDYLRPDGKTQVTIAYEDGKPVAIDTILISTQHKAAIGDISDDNAVQERIKSDLWEQVVLPVFSDLVIQPDSATRFLVNPTGKFVIGGPQGDAGLTGRKIIVDTYGGYSRHGGGAFSGKDPTKVDRSAAYACRYVAKNIVAAGLAEKCEVQLSYAIGVARPVSVLVETFGTGKVADEVLLDLVRKHFELRPAGIIEHFNLQRLPGERGGRFYQEVAAYGHFGRNDLDLPWEQTDKADTLRQEALATTQA.

Residue histidine 16 participates in ATP binding. Residue aspartate 18 participates in Mg(2+) binding. Glutamate 44 is a binding site for K(+). Glutamate 57 and glutamine 100 together coordinate L-methionine. Residues 100–110 (QSPDIAQGVDT) are flexible loop. ATP contacts are provided by residues 175 to 177 (DGK), 251 to 252 (KF), aspartate 260, 266 to 267 (RK), alanine 283, and lysine 287. Aspartate 260 provides a ligand contact to L-methionine. Position 291 (lysine 291) interacts with L-methionine.

Belongs to the AdoMet synthase family. As to quaternary structure, homotetramer; dimer of dimers. The cofactor is Mg(2+). K(+) serves as cofactor.

The protein resides in the cytoplasm. The enzyme catalyses L-methionine + ATP + H2O = S-adenosyl-L-methionine + phosphate + diphosphate. It participates in amino-acid biosynthesis; S-adenosyl-L-methionine biosynthesis; S-adenosyl-L-methionine from L-methionine: step 1/1. Its function is as follows. Catalyzes the formation of S-adenosylmethionine (AdoMet) from methionine and ATP. The overall synthetic reaction is composed of two sequential steps, AdoMet formation and the subsequent tripolyphosphate hydrolysis which occurs prior to release of AdoMet from the enzyme. The protein is S-adenosylmethionine synthase of Synechococcus elongatus (strain ATCC 33912 / PCC 7942 / FACHB-805) (Anacystis nidulans R2).